The sequence spans 434 residues: uncharacterized protein (434 aa).

The TRAM domain occupies 4–62; sequence LLTIHTQVEGEITALAFGGAGILRYHGFVIFVPFTAPGDQIICRIIEIKKSFAVAELVK. The [4Fe-4S] cluster site is built by Cys-75, Cys-81, Cys-84, and Cys-161. S-adenosyl-L-methionine-binding residues include Gln-266, Tyr-295, Glu-316, and Asn-364. Cys-391 acts as the Nucleophile in catalysis.

Belongs to the class I-like SAM-binding methyltransferase superfamily. RNA M5U methyltransferase family.

This is an uncharacterized protein from Protochlamydia amoebophila (strain UWE25).